Here is a 787-residue protein sequence, read N- to C-terminus: Protocadherin beta-15 (787 aa).

An N-terminal signal peptide occupies residues 1-26 (MEPAGERFPEQRQVLILLLLLEVTLA). At 27-690 (GWEPRRYSVM…AQADSLTVYL (664 aa)) the chain is on the extracellular side. Cadherin domains follow at residues 35–133 (VMEE…SPEF), 138–242 (ITLK…APEF), 247–347 (YEVQ…FPEL), 352–451 (LTSP…APAF), and 456–561 (YTLF…SPFV). N-linked (GlcNAc...) asparagine glycans are attached at residues Asn-418 and Asn-436. Asn-567 carries an N-linked (GlcNAc...) asparagine glycan. The region spanning 568–671 (GSAPCTELVP…LVDGFSQPYL (104 aa)) is the Cadherin 6 domain. Residues 691 to 711 (VVALASVSSLFLFSVLLFVAV) traverse the membrane as a helical segment. Topologically, residues 712 to 787 (RLCRRSRAAS…DSRRKSEFLE (76 aa)) are cytoplasmic.

The protein localises to the cell membrane. Functionally, potential calcium-dependent cell-adhesion protein. May be involved in the establishment and maintenance of specific neuronal connections in the brain. The polypeptide is Protocadherin beta-15 (PCDHB15) (Pan troglodytes (Chimpanzee)).